Here is a 239-residue protein sequence, read N- to C-terminus: Probable intron-encoded endonuclease I-ZbiI (239 aa).

The protein belongs to the LAGLIDADG endonuclease family.

It localises to the mitochondrion. Endonuclease involved in mitochondrial 21S rRNA gene intron homing. This Zygosaccharomyces bisporus protein is Probable intron-encoded endonuclease I-ZbiI.